Reading from the N-terminus, the 520-residue chain is MSDQNKTKDYSKYFDFSDARVVSEDDEKKIIKIKGREITIYDQPNYRAGRKRKREDVQVLRPENLIPEEVANLGAGKKFLIRTYGCQMNVHDSENMSGLLLGMGFEETTETEEADIILLNTCAIRENAENKVFGEIGNLKPLKLEKPELIIGVCGCMSQEESVVGKIMEKHQHIDLIFGTHNIHRLPHLLRDAIFGKEMVIEVWSKEGDIVENMPRSRKNKTQAWVNIMYGCDKFCTYCIVPYTRGKERSRLPEDIIAEVRDLARQGYKEITLLGQNVNAYGKDLPGSYRLGDLMNEIHKIDIPRVRFTTSHPRDFDDHLIEVLAQGGNLVEHIHLPVQHGNSDILKLMGRKYTREQYITLANKIKQAIPNASFTTDLIVGFPNETEEQFQDMLSLVEEIQFDAAYTYIYSPREGTPAARMEDNVPMSVKKERLARLNALVNDISNKRNLDYQDKIVEVLVEGESKKNTDVLAGRTRTNRLVNFVGPKSAIGEIVYVKITEAKTWSLDGEIVSAPEVKAQ.

In terms of domain architecture, MTTase N-terminal spans 77–195 (KKFLIRTYGC…LPHLLRDAIF (119 aa)). Residues Cys-86, Cys-122, Cys-156, Cys-232, Cys-236, and Cys-239 each contribute to the [4Fe-4S] cluster site. Residues 218-448 (RKNKTQAWVN…ALVNDISNKR (231 aa)) form the Radical SAM core domain. The TRAM domain occupies 450–513 (LDYQDKIVEV…TWSLDGEIVS (64 aa)).

Belongs to the methylthiotransferase family. MiaB subfamily. In terms of assembly, monomer. [4Fe-4S] cluster is required as a cofactor.

It is found in the cytoplasm. It catalyses the reaction N(6)-dimethylallyladenosine(37) in tRNA + (sulfur carrier)-SH + AH2 + 2 S-adenosyl-L-methionine = 2-methylsulfanyl-N(6)-dimethylallyladenosine(37) in tRNA + (sulfur carrier)-H + 5'-deoxyadenosine + L-methionine + A + S-adenosyl-L-homocysteine + 2 H(+). In terms of biological role, catalyzes the methylthiolation of N6-(dimethylallyl)adenosine (i(6)A), leading to the formation of 2-methylthio-N6-(dimethylallyl)adenosine (ms(2)i(6)A) at position 37 in tRNAs that read codons beginning with uridine. This Shouchella clausii (strain KSM-K16) (Alkalihalobacillus clausii) protein is tRNA-2-methylthio-N(6)-dimethylallyladenosine synthase.